The chain runs to 752 residues: Reticulon-1-B (752 aa).

Disordered regions lie at residues 1–57, 264–319, 334–424, and 444–465; these read MAAN…TSTD, EYPG…SEKQ, KAKE…SPSI, and ESCD…SPMM. Positions 264–273 are enriched in polar residues; sequence EYPGNQQGKS. The segment covering 334-361 has biased composition (basic and acidic residues); it reads KAKEGTKRFSSETNDEKQSRSFHAEKQD. The segment covering 363–383 has biased composition (polar residues); that stretch reads TVMSTEATSASHYTKASSAES. Residues 566–752 enclose the Reticulon domain; the sequence is AIDLLYWRDV…AKIPGTKQKE (187 aa). 2 helical membrane-spanning segments follow: residues 580–600 and 684–704; these read IVFG…VVSV and VLMW…LLIM.

In terms of tissue distribution, isoform A and isoform C are both expressed in the animal hemisphere (presumptive neural ectoderm) of blastula and gastrula stage embryos, and along the anterior neural border, in the panplacodal primordium, and in the dorsolateral side of archenteron roof of late neurula embryos. At the tailbud stage, expression of the isoforms begin to differ. Isoform A localizes to the cranial placodes including the trigeminal placode, lateral line placode, olfactory placode and otic vesicle. Isoform C localizes to the central nervous system, including the spinal cord, prosencephalon, mesencephalon and rhombencephalon, as well as the lateral line placode, otic vesicle and pronephros.

It localises to the endoplasmic reticulum membrane. The protein resides in the nucleus. Its function is as follows. Inhibits amyloid precursor protein processing, probably by blocking BACE1 activity. This is Reticulon-1-B (rtn1-b) from Xenopus laevis (African clawed frog).